Here is a 644-residue protein sequence, read N- to C-terminus: Threonine--tRNA ligase (644 aa).

The TGS domain occupies 1–61 (MNVTIEGQVF…ADTTTIEPVF (61 aa)). The catalytic stretch occupies residues 241–532 (DHRKLGQQLD…LTEHFAGAFP (292 aa)). The Zn(2+) site is built by Cys-333, His-384, and His-509.

Belongs to the class-II aminoacyl-tRNA synthetase family. Homodimer. Requires Zn(2+) as cofactor.

It localises to the cytoplasm. It carries out the reaction tRNA(Thr) + L-threonine + ATP = L-threonyl-tRNA(Thr) + AMP + diphosphate + H(+). Catalyzes the attachment of threonine to tRNA(Thr) in a two-step reaction: L-threonine is first activated by ATP to form Thr-AMP and then transferred to the acceptor end of tRNA(Thr). Also edits incorrectly charged L-seryl-tRNA(Thr). This chain is Threonine--tRNA ligase, found in Nitratidesulfovibrio vulgaris (strain DSM 19637 / Miyazaki F) (Desulfovibrio vulgaris).